Here is a 215-residue protein sequence, read N- to C-terminus: MKFFIDTANIDEIKDALAMGMVDGVTTNPSLIAKEAGEFTDIIREICSIVEGPVSAEVISLDYDGMVKEARDLAKIADNIVVKIPMTVDGLKAVRTLTNEGIKTNVTLIFSATQALMAAKAGATYASPFVGRIDDLALDGMNLIEEIAEIYSNYMFDTQIIVASVRNPLHVLNSALIGADIATIPHKVLSALASHPLTDRGIESFMADWKKKENK.

The Schiff-base intermediate with substrate role is filled by Lys-83.

Belongs to the transaldolase family. Type 3B subfamily.

Its subcellular location is the cytoplasm. The catalysed reaction is D-sedoheptulose 7-phosphate + D-glyceraldehyde 3-phosphate = D-erythrose 4-phosphate + beta-D-fructose 6-phosphate. It functions in the pathway carbohydrate degradation; pentose phosphate pathway; D-glyceraldehyde 3-phosphate and beta-D-fructose 6-phosphate from D-ribose 5-phosphate and D-xylulose 5-phosphate (non-oxidative stage): step 2/3. Transaldolase is important for the balance of metabolites in the pentose-phosphate pathway. In Desulforapulum autotrophicum (strain ATCC 43914 / DSM 3382 / VKM B-1955 / HRM2) (Desulfobacterium autotrophicum), this protein is Probable transaldolase.